The primary structure comprises 778 residues: Protein PHOTOPERIODIC CONTROL OF HYPOCOTYL 1 (778 aa).

Disordered regions lie at residues 74-95 (QKRE…VGSS), 186-283 (HNRG…NSAT), and 316-335 (KTSP…KEAS). Basic and acidic residues predominate over residues 198-212 (SSKDTQEDGPRKNES). Positions 230 to 247 (SGSISSSSTKGKGIKGYS) are enriched in low complexity. The segment covering 265–275 (PDRENSVDGHQ) has biased composition (basic and acidic residues). A compositionally biased stretch (polar residues) spans 317–326 (TSPSDSSETK). Residues 470 to 505 (WPLLPNDLLELIMGHLETSFEIFLFRSVCSSWRSVV) form the F-box domain.

As to quaternary structure, interacts with light-activated phyB. Binds directly to PIF1 and COP1. Post-translationally, ubiquitinated by COP1 in darkness; this leads to proteasomal degradation. In terms of tissue distribution, mainly expressed in cotyledons, hypocotyls, leaves and roots.

It localises to the nucleus. Functionally, together with PCHL, regulates growth and development adaptation to the ambient environment by controlling negatively phytochrome B (phyB) dark reversion, a temperature-dependent thermal relaxation process during which phyB reverts from the active to the inactive state. Contributes to red (R) light-triggered photomorphogenesis. Promotes various light responses such as seed germination, hypocotyl gravitropism and chlorophyll biosynthesis, via direct interaction with PIF1 and COP1. Prevents DNA-binding ability of PIF1 to negatively regulate the expressions of its target genes. Facilitates the physical interaction between phyB and PIF1 and the subsequent light-induced degradation of PIF1. This is Protein PHOTOPERIODIC CONTROL OF HYPOCOTYL 1 from Arabidopsis thaliana (Mouse-ear cress).